A 364-amino-acid polypeptide reads, in one-letter code: Homeobox protein KNOX3 (364 aa).

The disordered stretch occupies residues threonine 13–glycine 49. Residues histidine 19–leucine 29 show a composition bias toward polar residues. One can recognise an ELK domain in the interval glutamate 246–leucine 266. A DNA-binding region (homeobox; TALE-type) is located at residues serine 267–threonine 330.

It belongs to the TALE/KNOX homeobox family. As to quaternary structure, binds DNA as a monomer. In terms of tissue distribution, the unit of inflorescence is the spikelet, which bears a fertile tract, the lemma, and the floret consisting of palea, two lodicules, three stamens and the pistil. The lemma is completed by the awn, an appendage homologous to the laminae of normal leaves. Expressed in the inflorescences and lemmas and at lower levels, in palea and vascular bundles.

It is found in the nucleus. In terms of biological role, may play a role in meristem formation and/or maintenance. Overexpression causes the hooded phenotype characterized by the appearance of an extra flower of inverse polarity on the lemma. Binds to the DNA sequence 5'-TGAC-3'. The sequence is that of Homeobox protein KNOX3 (KNOX3) from Hordeum vulgare (Barley).